Here is a 119-residue protein sequence, read N- to C-terminus: MARSVVVALLVLLSLSGLEAIQHAPKIQVYSRHPAENGKPNFLNCYVSGFHPSDIEVDLLKNGKKIEKVEHSDLSFSKDWSFYLLYYTEFTPNEKDEYACRVSHVTFSTPKTVKWDRTM.

Residues 1 to 20 (MARSVVVALLVLLSLSGLEA) form the signal peptide. The 90-residue stretch at 25–114 (PKIQVYSRHP…VTFSTPKTVK (90 aa)) folds into the Ig-like C1-type domain. Cys-45 and Cys-100 are disulfide-bonded.

This sequence belongs to the beta-2-microglobulin family. Heterodimer of an alpha chain and a beta chain. Beta-2-microglobulin is the beta-chain of major histocompatibility complex class I molecules.

It localises to the secreted. Functionally, component of the class I major histocompatibility complex (MHC). Involved in the presentation of peptide antigens to the immune system. The chain is Beta-2-microglobulin (B2M) from Ateles paniscus (Black spider monkey).